We begin with the raw amino-acid sequence, 578 residues long: CTP synthase 2 (578 aa).

The 260-residue stretch at 305 to 564 folds into the Glutamine amidotransferase type-1 domain; that stretch reads KIALVGKYTN…VAAASGTLGE (260 aa). Catalysis depends on for GATase activity residues Cys-404, His-537, and Glu-539.

This sequence belongs to the CTP synthase family. Homodimer. Oligomerizes to a tetramer in the presence of its substrates UTP and ATP. The cofactor is Mg(2+).

It is found in the cytoplasm. The enzyme catalyses UTP + L-glutamine + ATP + H2O = CTP + L-glutamate + ADP + phosphate + 2 H(+). It functions in the pathway pyrimidine metabolism; CTP biosynthesis via de novo pathway; CTP from UDP: step 2/2. Its activity is regulated as follows. Activated by GTP. Subject to allosteric product inhibition by CTP. Inhibited by p-chloromercuriphenylsulfonic acid, N-ethylmaleimide and cyclopentenylcytosine (CPEC). Its function is as follows. Catalyzes the ATP-dependent amination of UTP to CTP with either L-glutamine or ammonia as the source of nitrogen. Plays an important role in the regulation of phospholipid synthesis. The polypeptide is CTP synthase 2 (URA8) (Saccharomyces cerevisiae (strain ATCC 204508 / S288c) (Baker's yeast)).